Reading from the N-terminus, the 146-residue chain is Ribosome maturation factor RimP (146 aa).

The protein belongs to the RimP family.

It localises to the cytoplasm. Functionally, required for maturation of 30S ribosomal subunits. The sequence is that of Ribosome maturation factor RimP from Helicobacter pylori (strain Shi470).